Here is a 1115-residue protein sequence, read N- to C-terminus: Eukaryotic translation initiation factor 2-alpha kinase 3 (1115 aa).

An N-terminal signal peptide occupies residues 1 to 29 (MERATGPGSLARTLLLPLLLGLVAGTVTA). The Extracellular segment spans residues 30 to 514 (RRTSDLLAPT…PNYKNIRKKD (485 aa)). The interval 74 to 101 (SEALPAAAGEQEAREPEPEPEEEPDIRP) is disordered. N-linked (GlcNAc...) asparagine glycosylation occurs at N259. Residues 515 to 535 (PVLLLHWWKEIVGTIVFCIVA) traverse the membrane as a helical segment. Topologically, residues 536-1115 (TTFIVRRLFH…SSPHSPLPSN (580 aa)) are cytoplasmic. The Protein kinase domain occupies 593–1076 (FEPIQCMGRG…AASIIENAIF (484 aa)). 599 to 607 (MGRGGFGVV) contributes to the ATP binding site. At Y619 the chain carries Phosphotyrosine; by autocatalysis. K622 is a binding site for ATP. The insert loop stretch occupies residues 647–887 (EHPGIVRYFN…SPKVYLYIQM (241 aa)). S715 is modified (phosphoserine). Position 802 is a phosphothreonine (T802). Disordered regions lie at residues 807 to 832 (VFED…VGNH) and 841 to 860 (RHSG…SRPT). Over residues 845–860 (SKSSEPTVSVSPSRPT) the composition is skewed to polar residues. The Proton acceptor role is filled by D936. T981 bears the Phosphothreonine mark. Positions 1087–1115 (LRQRSRSMSSPGAKHSRHSSSPHSPLPSN) are disordered. A Phosphoserine modification is found at S1093.

This sequence belongs to the protein kinase superfamily. Ser/Thr protein kinase family. GCN2 subfamily. In terms of assembly, forms dimers with HSPA5/BIP in resting cells. Homotetramerizes in response to endoplasmic reticulum (ER) stress, leading to its activation. Interacts with HSP90B1/GRP94. Interacts with DNAJC3; inhibiting EIF2AK3/PERK activity. Interacts with ATAD3A; ATAD3A and EIF2S1/eIF-2-alpha occupy a common binding site within the cytoplasmic loop of EIF2AK3/PERK, leading to prevent EIF2AK3/PERK association with its substrate EIF2S1/eIF-2-alpha. Interacts with MFN2. Interacts with TMEM33. Interacts with PDIA6. Interacts with LACC1. In terms of processing, oligomerization of the N-terminal ER luminal domain by ER stress promotes EIF2AK3/PERK trans-autophosphorylation of the C-terminal cytoplasmic kinase domain at multiple residues including Thr-981 on the kinase activation loop. Autophosphorylated at Tyr-619 following endoplasmic reticulum stress, leading to activate its activity. Dephosphorylated at Tyr-619 by PTPN1/PTP1B, leading to inactivate its enzyme activity. Phosphorylation at Thr-802 by AKT (AKT1, AKT2 and/or AKT3) inactivates EIF2AK3/PERK. ADP-ribosylated by PARP16 upon ER stress, which increases kinase activity.

It localises to the endoplasmic reticulum membrane. It catalyses the reaction L-seryl-[protein] + ATP = O-phospho-L-seryl-[protein] + ADP + H(+). The enzyme catalyses L-threonyl-[protein] + ATP = O-phospho-L-threonyl-[protein] + ADP + H(+). The catalysed reaction is L-tyrosyl-[protein] + ATP = O-phospho-L-tyrosyl-[protein] + ADP + H(+). Its activity is regulated as follows. Inhibited by HSPA5/BIP in absence of stress. Perturbation in protein folding in the endoplasmic reticulum (ER) promotes reversible dissociation from HSPA5/BIP and oligomerization, resulting in trans-autophosphorylation and kinase activity induction. Inactivated following phosphorylation at Thr-802 by AKT (AKT1, AKT2 and/or AKT3). Inhibited by ATAD3A at mitochondria-endoplasmic reticulum contact sites, providing a safe haven for mitochondrial protein translation during ER stress. Functionally, metabolic-stress sensing protein kinase that phosphorylates the alpha subunit of eukaryotic translation initiation factor 2 (EIF2S1/eIF-2-alpha) in response to various stress, such as unfolded protein response (UPR). Key effector of the integrated stress response (ISR) to unfolded proteins: EIF2AK3/PERK specifically recognizes and binds misfolded proteins, leading to its activation and EIF2S1/eIF-2-alpha phosphorylation. EIF2S1/eIF-2-alpha phosphorylation in response to stress converts EIF2S1/eIF-2-alpha in a global protein synthesis inhibitor, leading to a global attenuation of cap-dependent translation, while concomitantly initiating the preferential translation of ISR-specific mRNAs, such as the transcriptional activators ATF4 and QRICH1, and hence allowing ATF4- and QRICH1-mediated reprogramming. The EIF2AK3/PERK-mediated unfolded protein response increases mitochondrial oxidative phosphorylation by promoting ATF4-mediated expression of COX7A2L/SCAF1, thereby increasing formation of respiratory chain supercomplexes. In contrast to most subcellular compartments, mitochondria are protected from the EIF2AK3/PERK-mediated unfolded protein response due to EIF2AK3/PERK inhibition by ATAD3A at mitochondria-endoplasmic reticulum contact sites. In addition to EIF2S1/eIF-2-alpha, also phosphorylates NFE2L2/NRF2 in response to stress, promoting release of NFE2L2/NRF2 from the BCR(KEAP1) complex, leading to nuclear accumulation and activation of NFE2L2/NRF2. Serves as a critical effector of unfolded protein response (UPR)-induced G1 growth arrest due to the loss of cyclin-D1 (CCND1). Involved in control of mitochondrial morphology and function. The polypeptide is Eukaryotic translation initiation factor 2-alpha kinase 3 (Bos taurus (Bovine)).